Here is a 180-residue protein sequence, read N- to C-terminus: Type-1 fimbrial protein subunit (180 aa).

Positions 1-22 (MKKVLLPLAALVLSATASNAMA) are cleaved as a signal peptide. Cys38 and Cys78 are oxidised to a cystine.

The protein belongs to the fimbrial protein family.

The protein resides in the fimbrium. In terms of biological role, fimbriae (also called pili), polar filaments radiating from the surface of the bacterium to a length of 0.5-1.5 micrometers and numbering 100-300 per cell, enable bacteria to colonize the epithelium of specific host organs. This chain is Type-1 fimbrial protein subunit (fimA), found in Serratia marcescens.